The sequence spans 492 residues: Ferruginol synthase (492 aa).

The chain crosses the membrane as a helical span at residues 1–21 (MDPFPLVAAALFIAATWFITF). Cysteine 436 serves as a coordination point for heme.

It belongs to the cytochrome P450 family. Heme is required as a cofactor. In terms of tissue distribution, expressed in leaf glandular trichomes.

The protein resides in the membrane. It catalyses the reaction abieta-8,11,13-triene + reduced [NADPH--hemoprotein reductase] + O2 = ferruginol + oxidized [NADPH--hemoprotein reductase] + H2O + H(+). The enzyme catalyses ferruginol + reduced [NADPH--hemoprotein reductase] + O2 = 11-hydroxyferruginol + oxidized [NADPH--hemoprotein reductase] + H2O + H(+). The catalysed reaction is miltiradiene + 2 reduced [NADPH--hemoprotein reductase] + 2 O2 = 11-oxomiltiradiene + 2 oxidized [NADPH--hemoprotein reductase] + 3 H2O + 2 H(+). It participates in secondary metabolite biosynthesis; terpenoid biosynthesis. In terms of biological role, monooxygenase involved in the biosynthesis of labdane-related diterpenes natural products. Catalyzes the oxidation of abietatriene to produce ferruginol. Catalyzes the oxidation of ferruginol at C-12 to produce 11-hydroxyferruginol. Ferruginol and 11-hydroxyferruginol are intermediates in the biosynthesis of carnosate, a potent antioxidant. May also convert miltiradiene into 11-oxomiltiradiene. The protein is Ferruginol synthase of Salvia fruticosa (Greek sage).